A 117-amino-acid polypeptide reads, in one-letter code: Probable non-functional immunoglobulin heavy variable 7-81 (117 aa).

A signal peptide spans 1–19; that stretch reads MDWTWSILFLVAAATGTYS. A framework-1 region spans residues 20-44; that stretch reads QVQLVQSGHEVKQPGASVKVSCKAS. The 98-residue stretch at 20–117 folds into the Ig-like domain; that stretch reads QVQLVQSGHE…EDMAMYYCAR (98 aa). Cys41 and Cys115 form a disulfide bridge. The segment at 45–52 is complementarity-determining-1; the sequence is GYSFTTYG. Residues 53-69 are framework-2; sequence MNWVPQAPGQGLEWMGW. Positions 70–77 are complementarity-determining-2; sequence FNTYTGNP. Asn76 is a glycosylation site (N-linked (GlcNAc...) asparagine). The interval 78–115 is framework-3; that stretch reads TYAQGFTGRFVFSMDTSASTAYLQISSLKAEDMAMYYC. Residues 116–117 are complementarity-determining-3; sequence AR.

As to quaternary structure, immunoglobulins are composed of two identical heavy chains and two identical light chains; disulfide-linked.

The protein localises to the secreted. It localises to the cell membrane. Functionally, probable non-functional open reading frame (ORF) of V region of the variable domain of immunoglobulin heavy chains. Non-functional ORF generally cannot participate in the synthesis of a productive immunoglobulin chain due to altered V-(D)-J or switch recombination and/or splicing site (at mRNA level) and/or conserved amino acid change (protein level). Immunoglobulins, also known as antibodies, are membrane-bound or secreted glycoproteins produced by B lymphocytes. In the recognition phase of humoral immunity, the membrane-bound immunoglobulins serve as receptors which, upon binding of a specific antigen, trigger the clonal expansion and differentiation of B lymphocytes into immunoglobulins-secreting plasma cells. Secreted immunoglobulins mediate the effector phase of humoral immunity, which results in the elimination of bound antigens. The antigen binding site is formed by the variable domain of one heavy chain, together with that of its associated light chain. Thus, each immunoglobulin has two antigen binding sites with remarkable affinity for a particular antigen. The variable domains are assembled by a process called V-(D)-J rearrangement and can then be subjected to somatic hypermutations which, after exposure to antigen and selection, allow affinity maturation for a particular antigen. The sequence is that of Probable non-functional immunoglobulin heavy variable 7-81 from Homo sapiens (Human).